We begin with the raw amino-acid sequence, 74 residues long: Protein krueppel (74 aa).

4 consecutive C2H2-type zinc fingers follow at residues 1-4, 10-32, 38-60, and 66-74; these read ERTH, FECQECHKRFTRDHHLKTHMRLH, YRCEHCDRQFVQVANLRRHLRVH, and YGCEHCSMK.

It belongs to the krueppel C2H2-type zinc-finger protein family.

It localises to the nucleus. Krueppel is a gap class segmentation protein. This Tribolium castaneum (Red flour beetle) protein is Protein krueppel (Kr).